Reading from the N-terminus, the 304-residue chain is Granaticin polyketide synthase bifunctional cyclase/dehydratase (304 aa).

The protein operates within antifungal biosynthesis; monensin biosynthesis. Is needed for correct cyclization of the oligoketide leading to isochromanequinone formation. The sequence is that of Granaticin polyketide synthase bifunctional cyclase/dehydratase from Streptomyces virginiae (Streptomyces cinnamonensis).